The primary structure comprises 128 residues: RxLR effector protein SFI2 (128 aa).

The signal sequence occupies residues 1–22 (MRSAFYIFLVVAVLARCSVVAA). Positions 52 to 71 (RLLRVAGREDDDATTDEEDR) match the RxLR-dEER motif.

Belongs to the RxLR effector family.

Its subcellular location is the secreted. The protein localises to the host nucleus. Its function is as follows. Effector that suppresses flg22-induced post-translational MAP kinase activation both tomato and Arabidopsis. The perception of highly conserved pathogen- or microbe-associated molecular patterns (PAMPs/MAMPs), such as flg22, triggers converging signaling pathways recruiting MAP kinase cascades and inducing transcriptional re-programming, yielding a generic antimicrobial response. The protein is RxLR effector protein SFI2 of Phytophthora infestans (strain T30-4) (Potato late blight agent).